Consider the following 498-residue polypeptide: Glycerol kinase (498 aa).

Thr-11 lines the ADP pocket. Positions 11, 12, and 13 each coordinate ATP. Position 11 (Thr-11) interacts with sn-glycerol 3-phosphate. Arg-15 contacts ADP. Residues Arg-81, Glu-82, Tyr-133, and Asp-242 each contribute to the sn-glycerol 3-phosphate site. Residues Arg-81, Glu-82, Tyr-133, Asp-242, and Gln-243 each coordinate glycerol. Thr-264 and Gly-307 together coordinate ADP. ATP-binding residues include Thr-264, Gly-307, Gln-311, and Gly-412. Residues Gly-412 and Asn-416 each contribute to the ADP site.

The protein belongs to the FGGY kinase family.

It catalyses the reaction glycerol + ATP = sn-glycerol 3-phosphate + ADP + H(+). The protein operates within polyol metabolism; glycerol degradation via glycerol kinase pathway; sn-glycerol 3-phosphate from glycerol: step 1/1. Its activity is regulated as follows. Inhibited by fructose 1,6-bisphosphate (FBP). Its function is as follows. Key enzyme in the regulation of glycerol uptake and metabolism. Catalyzes the phosphorylation of glycerol to yield sn-glycerol 3-phosphate. The chain is Glycerol kinase from Acidovorax ebreus (strain TPSY) (Diaphorobacter sp. (strain TPSY)).